We begin with the raw amino-acid sequence, 432 residues long: Delta-aminolevulinic acid dehydratase, chloroplastic (432 aa).

The interval 84–113 (AAPPVPAKPSAPEGTPAISPLVMPARPRRN) is disordered. Lysine 300 (schiff-base intermediate with substrate) is an active-site residue. 5-aminolevulinate-binding residues include arginine 310 and lysine 322. Glutamate 338 lines the Mg(2+) pocket. Lysine 353 serves as the catalytic Schiff-base intermediate with substrate. Residues serine 379 and tyrosine 418 each contribute to the 5-aminolevulinate site.

This sequence belongs to the ALAD family. Homooctamer. It depends on Mg(2+) as a cofactor.

The protein localises to the plastid. It localises to the chloroplast. The catalysed reaction is 2 5-aminolevulinate = porphobilinogen + 2 H2O + H(+). The protein operates within porphyrin-containing compound metabolism; protoporphyrin-IX biosynthesis; coproporphyrinogen-III from 5-aminolevulinate: step 1/4. Catalyzes an early step in the biosynthesis of tetrapyrroles. Binds two molecules of 5-aminolevulinate per subunit, each at a distinct site, and catalyzes their condensation to form porphobilinogen. This chain is Delta-aminolevulinic acid dehydratase, chloroplastic (HEMB), found in Physcomitrium patens (Spreading-leaved earth moss).